A 200-amino-acid chain; its full sequence is Lipopolysaccharide core heptose(II)-phosphate phosphatase (200 aa).

Positions 1 to 25 are cleaved as a signal peptide; that stretch reads MLAFCRSSLKSKKYFIILLALAAIA.

This sequence belongs to the phosphoglycerate mutase family. Ais subfamily.

It localises to the periplasm. Its pathway is bacterial outer membrane biogenesis; lipopolysaccharide metabolism. Functionally, catalyzes the dephosphorylation of heptose(II) of the outer membrane lipopolysaccharide core. In Escherichia coli O17:K52:H18 (strain UMN026 / ExPEC), this protein is Lipopolysaccharide core heptose(II)-phosphate phosphatase.